We begin with the raw amino-acid sequence, 906 residues long: uncharacterized protein (906 aa).

2 disordered regions span residues Lys231–Ile322 and Ala865–Glu906. Over residues Thr236–Thr250 the composition is skewed to low complexity. The segment covering Thr264–Ala281 has biased composition (pro residues). Polar residues predominate over residues Ser302–Glu314. A compositionally biased stretch (acidic residues) spans Ala867–Glu906.

This is an uncharacterized protein from Dictyostelium sp. (strain GA11) (Slime mold).